Here is a 67-residue protein sequence, read N- to C-terminus: UPF0437 protein y4xE (67 aa).

It belongs to the UPF0437 family.

This chain is UPF0437 protein y4xE, found in Sinorhizobium fredii (strain NBRC 101917 / NGR234).